Consider the following 358-residue polypeptide: 3-dehydroquinate synthase (358 aa).

Residues 70–75 (DGEQYK), 104–108 (GVIGD), 128–129 (TT), lysine 141, lysine 150, and 168–171 (CLST) contribute to the NAD(+) site. Residues glutamate 183, histidine 246, and histidine 263 each contribute to the Zn(2+) site.

The protein belongs to the sugar phosphate cyclases superfamily. Dehydroquinate synthase family. It depends on Co(2+) as a cofactor. Zn(2+) serves as cofactor. Requires NAD(+) as cofactor.

It is found in the cytoplasm. The catalysed reaction is 7-phospho-2-dehydro-3-deoxy-D-arabino-heptonate = 3-dehydroquinate + phosphate. The protein operates within metabolic intermediate biosynthesis; chorismate biosynthesis; chorismate from D-erythrose 4-phosphate and phosphoenolpyruvate: step 2/7. In terms of biological role, catalyzes the conversion of 3-deoxy-D-arabino-heptulosonate 7-phosphate (DAHP) to dehydroquinate (DHQ). The polypeptide is 3-dehydroquinate synthase (Shewanella woodyi (strain ATCC 51908 / MS32)).